Consider the following 1564-residue polypeptide: Superkiller complex protein 3 (1564 aa).

Residue S2 is modified to N-acetylserine. TPR repeat units follow at residues 6–39 (VKTA…EKNN), 40–73 (YNAW…EPDQ), 272–305 (GPGL…SPVC), 307–339 (SGWY…VDNL), 386–419 (PGLL…YPDL), 420–453 (AEVH…DTEV), 455–492 (EYHY…DTYM), 493–527 (GKVF…DDTD), 564–597 (KWAW…DPKD), 598–631 (FNCW…NPES), 633–665 (YSVF…KEDY), 679–713 (MAKA…RADV), 790–824 (AQHL…DSNN), 826–860 (LYWN…EQIN), 861–894 (AVAW…DPSY), 980–1013 (APAF…LQTA), 1020–1054 (NVAI…LEDI), 1056–1084 (GFAL…VESE), 1326–1359 (KWSL…NPDQ), and 1400–1433 (VPAW…ASQR).

This sequence belongs to the SKI3 family. In terms of assembly, component of the SKI complex which consists of SKIC2, SKIC3 and SKIC8. Interacts with PAF1. As to expression, widely expressed with the highest levels observed in vascular tissues, lymph node, pituitary, lung and intestine. Not expressed in the liver.

The protein resides in the cytoplasm. It is found in the nucleus. Component of the SKI complex, a multiprotein complex that assists the RNA-degrading exosome during the mRNA decay and quality-control pathways. The SKI complex catalyzes mRNA extraction from 80S ribosomal complexes in the 3'-5' direction and channels mRNA to the cytosolic exosome for degradation. SKI-mediated extraction of mRNA from stalled ribosomes allow binding of the Pelota-HBS1L complex and subsequent ribosome disassembly by ABCE1 for ribosome recycling. In the nucleus, the SKI complex associates with transcriptionally active genes in a manner dependent on PAF1 complex (PAF1C). This Homo sapiens (Human) protein is Superkiller complex protein 3.